The sequence spans 155 residues: Protein-export protein SecB (155 aa).

This sequence belongs to the SecB family. In terms of assembly, homotetramer, a dimer of dimers. One homotetramer interacts with 1 SecA dimer.

It localises to the cytoplasm. One of the proteins required for the normal export of preproteins out of the cell cytoplasm. It is a molecular chaperone that binds to a subset of precursor proteins, maintaining them in a translocation-competent state. It also specifically binds to its receptor SecA. The sequence is that of Protein-export protein SecB from Vibrio vulnificus (strain CMCP6).